The following is a 344-amino-acid chain: MIKVGIVGGTGYTGVELLRLLAQHPQARVEVITSRSEAGVKVVDMYPNLRGHYDDLQFSVPDTQRLGACDVVFFATPHGVAHALAGELLDAGTRVIDLSADFRLADAEEWARWYGQPHGAPALLEEAVYGLPEVNREKIRQARLIAVPGCYPTATQLGLIPLLEAGLADASRLIADCKSGVSGAGRGAKVGSLFCEAGESMMAYAVKGHRHLPEISQGLRRASGGEVGLTFVPHLTPMIRGIHATLYAHVADRSVDLQALFEKRYANEPFVDVMPAGSHPETRSVRGANVCRIAVHRPQGGDLVVVLSVIDNLVKGASGQALQNMNILFGLDERLGLSHAALLP.

The active site involves cysteine 150.

It belongs to the NAGSA dehydrogenase family. Type 1 subfamily.

The protein resides in the cytoplasm. It carries out the reaction N-acetyl-L-glutamate 5-semialdehyde + phosphate + NADP(+) = N-acetyl-L-glutamyl 5-phosphate + NADPH + H(+). It functions in the pathway amino-acid biosynthesis; L-arginine biosynthesis; N(2)-acetyl-L-ornithine from L-glutamate: step 3/4. Its function is as follows. Catalyzes the NADPH-dependent reduction of N-acetyl-5-glutamyl phosphate to yield N-acetyl-L-glutamate 5-semialdehyde. This is N-acetyl-gamma-glutamyl-phosphate reductase from Pseudomonas paraeruginosa (strain DSM 24068 / PA7) (Pseudomonas aeruginosa (strain PA7)).